A 101-amino-acid chain; its full sequence is NAD(P)H-quinone oxidoreductase subunit 4L, chloroplastic (101 aa).

3 consecutive transmembrane segments (helical) span residues 2–22 (MLEH…YGLI), 32–52 (MCLE…SDLF), and 61–81 (IFSI…PAIV).

The protein belongs to the complex I subunit 4L family. NDH is composed of at least 16 different subunits, 5 of which are encoded in the nucleus.

The protein resides in the plastid. It is found in the chloroplast thylakoid membrane. The enzyme catalyses a plastoquinone + NADH + (n+1) H(+)(in) = a plastoquinol + NAD(+) + n H(+)(out). It carries out the reaction a plastoquinone + NADPH + (n+1) H(+)(in) = a plastoquinol + NADP(+) + n H(+)(out). NDH shuttles electrons from NAD(P)H:plastoquinone, via FMN and iron-sulfur (Fe-S) centers, to quinones in the photosynthetic chain and possibly in a chloroplast respiratory chain. The immediate electron acceptor for the enzyme in this species is believed to be plastoquinone. Couples the redox reaction to proton translocation, and thus conserves the redox energy in a proton gradient. The protein is NAD(P)H-quinone oxidoreductase subunit 4L, chloroplastic of Chloranthus spicatus (Chulantree).